A 337-amino-acid polypeptide reads, in one-letter code: Putative 4-hydroxythreonine-4-phosphate dehydrogenase 2 (337 aa).

His-173, His-217, and His-274 together coordinate a divalent metal cation.

Belongs to the PdxA family. As to quaternary structure, homodimer. The cofactor is Zn(2+). It depends on Mg(2+) as a cofactor. Co(2+) serves as cofactor.

Its subcellular location is the cytoplasm. It catalyses the reaction 4-(phosphooxy)-L-threonine + NAD(+) = 3-amino-2-oxopropyl phosphate + CO2 + NADH. Its pathway is cofactor biosynthesis; pyridoxine 5'-phosphate biosynthesis; pyridoxine 5'-phosphate from D-erythrose 4-phosphate: step 4/5. In terms of biological role, catalyzes the NAD(P)-dependent oxidation of 4-(phosphooxy)-L-threonine (HTP) into 2-amino-3-oxo-4-(phosphooxy)butyric acid which spontaneously decarboxylates to form 3-amino-2-oxopropyl phosphate (AHAP). The polypeptide is Putative 4-hydroxythreonine-4-phosphate dehydrogenase 2 (Pseudomonas aeruginosa (strain ATCC 15692 / DSM 22644 / CIP 104116 / JCM 14847 / LMG 12228 / 1C / PRS 101 / PAO1)).